A 180-amino-acid chain; its full sequence is MANSFATKYNEEIVPALTKKFNYTSSMQVPKIDKIVLNMGVGDAVANAKNLDEAVEELTLISGQKPMITKAKKSIANFRLREGMSIGAKVTLRGDRMYDFLSKLINVSLPRVRDFRGVSTRSFDGRGNYTLGVKEQLIFPEIDFDKVNRTRGLDIVIVTTAQTDEEARELLTQFGMPFAK.

It belongs to the universal ribosomal protein uL5 family. As to quaternary structure, part of the 50S ribosomal subunit; part of the 5S rRNA/L5/L18/L25 subcomplex. Contacts the 5S rRNA and the P site tRNA. Forms a bridge to the 30S subunit in the 70S ribosome.

Functionally, this is one of the proteins that bind and probably mediate the attachment of the 5S RNA into the large ribosomal subunit, where it forms part of the central protuberance. In the 70S ribosome it contacts protein S13 of the 30S subunit (bridge B1b), connecting the 2 subunits; this bridge is implicated in subunit movement. Contacts the P site tRNA; the 5S rRNA and some of its associated proteins might help stabilize positioning of ribosome-bound tRNAs. This chain is Large ribosomal subunit protein uL5, found in Lactobacillus delbrueckii subsp. bulgaricus (strain ATCC 11842 / DSM 20081 / BCRC 10696 / JCM 1002 / NBRC 13953 / NCIMB 11778 / NCTC 12712 / WDCM 00102 / Lb 14).